The primary structure comprises 438 residues: MQVTLEKKEGIHCSLLIEVPANEIDSVVSKEINRTAKTIKMDGFRPGKVPAGMVKKKYGEQIRMEVISDLIPQKYSKAIQDEKLAVAGIEVELKENKEGQPLKFVANLELFPEFEVTGFEKIEVQKPVVELTDKEVKQMIENLRKQFATFSEVYKVVEKDDKVTIDFVGKKDGEAFEGGTANDIDVIIGSGQMIPGFEDGIIGMKKGEQKTITVTFPQDYQNKDLAGAETTFDITVKKIQQAELPEVNDEFVKKFGVKGGVDTFENEIKENMQRELKFILQRKVKDQVFKGLREIAKFETPKSLIKREIDAAKQNLLKQMGGAKGFDVNQLPDNLFEANAKQKVETSLILDSIMNSQEFKAEEAEVESLLDELVQAYEEPEKTKEQIKKNDKEIANLKALVIENKLTDWVLEQAKVTEKTEDFFEVIKENMQAQQAGF.

Residues 160-245 form the PPIase FKBP-type domain; the sequence is DDKVTIDFVG…VKKIQQAELP (86 aa).

This sequence belongs to the FKBP-type PPIase family. Tig subfamily.

It localises to the cytoplasm. It catalyses the reaction [protein]-peptidylproline (omega=180) = [protein]-peptidylproline (omega=0). Its function is as follows. Involved in protein export. Acts as a chaperone by maintaining the newly synthesized protein in an open conformation. Functions as a peptidyl-prolyl cis-trans isomerase. This chain is Trigger factor, found in Francisella tularensis subsp. holarctica (strain OSU18).